The chain runs to 235 residues: Large ribosomal subunit protein uL1 (235 aa).

It belongs to the universal ribosomal protein uL1 family. Part of the 50S ribosomal subunit.

Binds directly to 23S rRNA. The L1 stalk is quite mobile in the ribosome, and is involved in E site tRNA release. Its function is as follows. Protein L1 is also a translational repressor protein, it controls the translation of the L11 operon by binding to its mRNA. The sequence is that of Large ribosomal subunit protein uL1 from Pseudarthrobacter chlorophenolicus (strain ATCC 700700 / DSM 12829 / CIP 107037 / JCM 12360 / KCTC 9906 / NCIMB 13794 / A6) (Arthrobacter chlorophenolicus).